The chain runs to 783 residues: LPS-assembly protein LptD (783 aa).

The N-terminal stretch at 1–24 (MSCFSRTFLAASISAALFAPQIQA) is a signal peptide.

The protein belongs to the LptD family. In terms of assembly, component of the lipopolysaccharide transport and assembly complex. Interacts with LptE and LptA.

It is found in the cell outer membrane. Functionally, together with LptE, is involved in the assembly of lipopolysaccharide (LPS) at the surface of the outer membrane. This chain is LPS-assembly protein LptD, found in Vibrio cholerae serotype O1 (strain ATCC 39315 / El Tor Inaba N16961).